Reading from the N-terminus, the 223-residue chain is Coiled-coil domain-containing protein 124 (223 aa).

The tract at residues 1 to 126 (MPKKFQGENT…AEKAKSHLEV (126 aa)) is disordered. The stretch at 15 to 82 (ARARRAEAKA…LLEEEDSKLK (68 aa)) forms a coiled coil. Composition is skewed to basic and acidic residues over residues 18 to 74 (RRAE…QRLL) and 99 to 126 (QIED…HLEV). Phosphoserine is present on residues serine 141 and serine 194. Positions 204–223 (WLRSPDNPMNQRAVPFNAPK) are disordered.

This sequence belongs to the CCDC124 family. As to quaternary structure, associates with translationally inactive ribosomes in the nonrotated state. Interacts with RASGEF1B. In terms of tissue distribution, ubiquitously expressed.

It localises to the cytoplasm. The protein resides in the cytoskeleton. It is found in the microtubule organizing center. Its subcellular location is the centrosome. The protein localises to the midbody. Functionally, ribosome-binding protein involved in ribosome hibernation: associates with translationally inactive ribosomes and stabilizes the nonrotated conformation of the 80S ribosome, thereby promoting ribosome preservation and storage. Also required for proper progression of late cytokinetic stages. The protein is Coiled-coil domain-containing protein 124 of Homo sapiens (Human).